Reading from the N-terminus, the 84-residue chain is Neurotoxin BmK-M11 (84 aa).

A signal peptide spans 1 to 19 (MNYLVMISFALLLMTGVES). In terms of domain architecture, LCN-type CS-alpha/beta spans 21–83 (RDAYIAKPEN…VPIRVPGKCH (63 aa)). Intrachain disulfides connect Cys31–Cys82, Cys35–Cys55, Cys41–Cys65, and Cys45–Cys67. Arg84 is a propeptide (removed by a carboxypeptidase).

The protein belongs to the long (4 C-C) scorpion toxin superfamily. Sodium channel inhibitor family. Alpha subfamily. As to expression, expressed by the venom gland.

Its subcellular location is the secreted. Functionally, alpha toxins bind voltage-independently at site-3 of sodium channels (Nav) and inhibit the inactivation of the activated channels, thereby blocking neuronal transmission. This recombinant toxin selectively inhibits the fast inactivation of mNav1.4/SCN4A (EC(50)=82.3 nM) (tested in HEK293 cells). This Olivierus martensii (Manchurian scorpion) protein is Neurotoxin BmK-M11.